The primary structure comprises 607 residues: Dihydroxy-acid dehydratase (607 aa).

Aspartate 81 contacts Mg(2+). Cysteine 122 contributes to the [2Fe-2S] cluster binding site. Mg(2+) contacts are provided by aspartate 123 and lysine 124. Lysine 124 carries the N6-carboxylysine modification. Cysteine 195 is a [2Fe-2S] cluster binding site. Glutamate 489 lines the Mg(2+) pocket. The active-site Proton acceptor is serine 515.

This sequence belongs to the IlvD/Edd family. In terms of assembly, homodimer. The cofactor is [2Fe-2S] cluster. Mg(2+) serves as cofactor.

It carries out the reaction (2R)-2,3-dihydroxy-3-methylbutanoate = 3-methyl-2-oxobutanoate + H2O. The enzyme catalyses (2R,3R)-2,3-dihydroxy-3-methylpentanoate = (S)-3-methyl-2-oxopentanoate + H2O. It participates in amino-acid biosynthesis; L-isoleucine biosynthesis; L-isoleucine from 2-oxobutanoate: step 3/4. The protein operates within amino-acid biosynthesis; L-valine biosynthesis; L-valine from pyruvate: step 3/4. Functionally, functions in the biosynthesis of branched-chain amino acids. Catalyzes the dehydration of (2R,3R)-2,3-dihydroxy-3-methylpentanoate (2,3-dihydroxy-3-methylvalerate) into 2-oxo-3-methylpentanoate (2-oxo-3-methylvalerate) and of (2R)-2,3-dihydroxy-3-methylbutanoate (2,3-dihydroxyisovalerate) into 2-oxo-3-methylbutanoate (2-oxoisovalerate), the penultimate precursor to L-isoleucine and L-valine, respectively. In Deinococcus radiodurans (strain ATCC 13939 / DSM 20539 / JCM 16871 / CCUG 27074 / LMG 4051 / NBRC 15346 / NCIMB 9279 / VKM B-1422 / R1), this protein is Dihydroxy-acid dehydratase.